The following is a 507-amino-acid chain: Tryptamine 4-monooxygenase (507 aa).

Residues 1 to 19 (MIVLLVSLVLAGCIYYANA) form the signal peptide. The segment at 403–425 (PNPSEFRPERYLSSDGKPDPTVR) is disordered. A compositionally biased stretch (basic and acidic residues) spans 408–425 (FRPERYLSSDGKPDPTVR). Cys-439 serves as a coordination point for heme.

It belongs to the cytochrome P450 family. The cofactor is heme.

It carries out the reaction tryptamine + AH2 + O2 = 4-hydroxytryptamine + A + H2O. Its pathway is secondary metabolite biosynthesis. In terms of biological role, tryptamine 4-monooxygenase; part of the gene cluster that mediates the biosynthesis of psilocybin, a psychotropic tryptamine-derived natural product. The first step in the pathway is the decarboxylation of L-tryptophan to tryptamine by the decarboxylase psiD. PsiD does not decarboxylate phenylalanine, tyrosine, or 5-hydroxy- L -tryptophan (5-HTP). 4-hydroxy-L-tryptophan is accepted as substrate by psiD as well. The cytochrome P450 monooxygenase psiH then converts tryptamine to 4-hydroxytryptamine. The kinase psiK catalyzes the 4-O-phosphorylation step by converting 4-hydroxytryptamine into norbaeocystin. The methyltransferase psiM then catalyzes iterative methyl transfer to the amino group of norbaeocystin to yield psilocybin via a monomethylated intermediate, baeocystin. This chain is Tryptamine 4-monooxygenase, found in Psilocybe cyanescens.